We begin with the raw amino-acid sequence, 493 residues long: Activin receptor type-1C (493 aa).

A signal peptide spans 1 to 20 (MTRALCSALRQALLLLAAAA). Topologically, residues 22-113 (LSPGLKCVCL…PNAPKLGPME (92 aa)) are extracellular. The helical transmembrane segment at 114-134 (LAIIITVPVCLLSIAAMLTVW) threads the bilayer. Residues 135 to 493 (ACQGRQCSYR…QLCVKEDCKA (359 aa)) lie on the Cytoplasmic side of the membrane. Residues 165 to 194 (KTLKDLIYDVTASGSGSGLPLLVQRTIART) form the GS domain. The region spanning 195–485 (IVLQEIVGKG…LRIKKTISQL (291 aa)) is the Protein kinase domain. ATP contacts are provided by residues 201–209 (VGKGRFGEV) and Lys222. Asp323 functions as the Proton acceptor in the catalytic mechanism.

Belongs to the protein kinase superfamily. TKL Ser/Thr protein kinase family. TGFB receptor subfamily. In terms of assembly, binds the type 2 receptor protein ACVR2A. Mg(2+) is required as a cofactor. The cofactor is Mn(2+). As to expression, present in pancreas, heart, colon, small intestine, ovary and the hippocampus, medulla oblongata and putamen of the brain. Isoform 1, isoform 2, isoform 3 and isoform 4 are all expressed in the placenta throughout pregnancy.

Its subcellular location is the membrane. The catalysed reaction is L-threonyl-[receptor-protein] + ATP = O-phospho-L-threonyl-[receptor-protein] + ADP + H(+). It carries out the reaction L-seryl-[receptor-protein] + ATP = O-phospho-L-seryl-[receptor-protein] + ADP + H(+). Its function is as follows. Serine/threonine protein kinase which forms a receptor complex on ligand binding. The receptor complex consists of 2 type II and 2 type I transmembrane serine/threonine kinases. Type II receptors phosphorylate and activate type I receptors which autophosphorylate, then bind and activate SMAD transcriptional regulators, SMAD2 and SMAD3. Receptor for activin AB, activin B, activin E and NODAL. Upon NODAL binding, activation results in increased apoptosis and reduced proliferation through suppression of AKT signaling and the activation of Smad2-dependent signaling pathway in pancreatic beta-cells, trophoblasts, epithelial or neuronal cells. Acts as a positive regulator for macrophage activation partially through down-regulation of PPARG expression. This is Activin receptor type-1C from Homo sapiens (Human).